Reading from the N-terminus, the 479-residue chain is Glutamyl-tRNA(Gln) amidotransferase subunit A (479 aa).

Active-site charge relay system residues include lysine 75 and serine 150. The active-site Acyl-ester intermediate is the serine 174.

It belongs to the amidase family. GatA subfamily. In terms of assembly, heterotrimer of A, B and C subunits.

The enzyme catalyses L-glutamyl-tRNA(Gln) + L-glutamine + ATP + H2O = L-glutaminyl-tRNA(Gln) + L-glutamate + ADP + phosphate + H(+). Allows the formation of correctly charged Gln-tRNA(Gln) through the transamidation of misacylated Glu-tRNA(Gln) in organisms which lack glutaminyl-tRNA synthetase. The reaction takes place in the presence of glutamine and ATP through an activated gamma-phospho-Glu-tRNA(Gln). In Synechococcus sp. (strain ATCC 27144 / PCC 6301 / SAUG 1402/1) (Anacystis nidulans), this protein is Glutamyl-tRNA(Gln) amidotransferase subunit A.